We begin with the raw amino-acid sequence, 108 residues long: Mitochondrial pyruvate carrier 3 (108 aa).

3 helical membrane-spanning segments follow: residues 19 to 35, 51 to 67, and 74 to 90; these read IHFW…IANI, IVIT…STVI, and LFSV…YQLT.

This sequence belongs to the mitochondrial pyruvate carrier (MPC) (TC 2.A.105) family. In terms of tissue distribution, abundant in leaf and particularly in the guard cells.

The protein localises to the mitochondrion. Its subcellular location is the mitochondrion inner membrane. In terms of biological role, mediates the uptake of pyruvate into mitochondria. Negatively regulates ABA-induced guard cell signaling and mediates drought stress responses. The sequence is that of Mitochondrial pyruvate carrier 3 from Arabidopsis thaliana (Mouse-ear cress).